An 813-amino-acid polypeptide reads, in one-letter code: Ubiquitin carboxyl-terminal hydrolase 45 (813 aa).

Over residues 1 to 14 (MRVKDPSKDLPEKG) the composition is skewed to basic and acidic residues. Residues 1–27 (MRVKDPSKDLPEKGKRNKRPLLPHDED) form a disordered region. The interval 1-62 (MRVKDPSKDL…AVAESLWSVC (62 aa)) is interaction with ERCC1. 2 positions are modified to phosphoserine: Ser-28 and Ser-29. The UBP-type zinc-finger motif lies at 36–153 (LTCQHVSYAV…AQIVDFLQKH (118 aa)). Positions 38, 40, 62, 65, 85, 88, 93, 101, 105, 114, 127, and 130 each coordinate Zn(2+). The 622-residue stretch at 191–812 (KGITNLGNTC…QAYLLFYERI (622 aa)) folds into the USP domain. Catalysis depends on Cys-200, which acts as the Nucleophile. Basic and acidic residues-rich tracts occupy residues 405–414 (LQETDQDHNK) and 450–466 (WPSEEEKTVVTHPKNDN). Residues 405-552 (LQETDQDHNK…QAKETHGGEE (148 aa)) are disordered. The span at 472-488 (PASTLSTEASLNESLTD) shows a compositional bias: polar residues. Phosphoserine is present on residues Ser-507 and Ser-525. A compositionally biased stretch (basic and acidic residues) spans 521–533 (SRGDSCGHAEQHP). The active-site Proton acceptor is His-745.

This sequence belongs to the peptidase C19 family. Interacts with ERCC1. The catalytically active form interacts with SPDL1. Retina.

Its subcellular location is the photoreceptor inner segment. The protein resides in the cytoplasm. The protein localises to the nucleus. It carries out the reaction Thiol-dependent hydrolysis of ester, thioester, amide, peptide and isopeptide bonds formed by the C-terminal Gly of ubiquitin (a 76-residue protein attached to proteins as an intracellular targeting signal).. Catalyzes the deubiquitination of SPDL1. Plays a role in the repair of UV-induced DNA damage via deubiquitination of ERCC1, promoting its recruitment to DNA damage sites. May be involved in the maintenance of photoreceptor function. May play a role in normal retinal development. Plays a role in cell migration. This Mus musculus (Mouse) protein is Ubiquitin carboxyl-terminal hydrolase 45 (Usp45).